Reading from the N-terminus, the 422-residue chain is Keratin, type I cytoskeletal 23 (422 aa).

Over residues methionine 1 to arginine 24 the composition is skewed to polar residues. A disordered region spans residues methionine 1 to histidine 35. The interval methionine 1–asparagine 71 is head. The coil 1A stretch occupies residues glycine 72–tryptophan 107. Residues glycine 72–threonine 382 enclose the IF rod domain. Residues histidine 108–asparagine 125 are linker 1. The interval isoleucine 126 to asparagine 217 is coil 1B. The segment at histidine 218 to valine 240 is linker 12. A coil 2 region spans residues leucine 241–aspartate 378. Residues threonine 379–isoleucine 422 are rod-like helical tail.

It belongs to the intermediate filament family. As to quaternary structure, heterotetramer of two type I and two type II keratins.

This chain is Keratin, type I cytoskeletal 23 (Krt23), found in Mus musculus (Mouse).